The chain runs to 363 residues: Cytoplasmic envelopment protein 2 (363 aa).

This sequence belongs to the herpesviridae cytoplasmic envelopment protein 2 family. In terms of assembly, interacts with cytoplasmic envelopment protein 3 and with the capsid.

It is found in the virion tegument. Its subcellular location is the host cytoplasm. It localises to the host nucleus. In terms of biological role, plays a critical role in cytoplasmic virus egress. Participates in the final step of tegumentation and envelope acquisition within the host cytoplasm by directly interacting with the capsid. Upon virion binding to target cell, a signaling cascade is triggered to disrupt the interaction with the capsid, thereby preparing capsid uncoating. The chain is Cytoplasmic envelopment protein 2 (44) from Varicella-zoster virus (strain Dumas) (HHV-3).